A 117-amino-acid polypeptide reads, in one-letter code: Toxin CSTX-12 (117 aa).

The signal sequence occupies residues 1-20 (MKVLVICAVLFLTIFSNSSA). Residues 21-47 (ETEDDFLEDESFEADDVIPFLAREQVR) constitute a propeptide that is removed on maturation. 4 cysteine pairs are disulfide-bonded: cysteine 50-cysteine 65, cysteine 57-cysteine 74, cysteine 64-cysteine 95, and cysteine 76-cysteine 93. Residues 82 to 87 (RSDTAR) constitute a propeptide that is removed on maturation. The residue at position 116 (alanine 116) is an Alanine amide.

This sequence belongs to the neurotoxin 19 (CSTX) family. 12 subfamily. As to quaternary structure, heterodimer of A and B chains; disulfide-linked. Interacts with CSTX-1 (AC P81694), and with CSTX-9 (AC P58604). In terms of tissue distribution, expressed by the venom gland.

It localises to the secreted. The protein localises to the target cell membrane. In terms of biological role, synergistic toxin that induces or increases a cytolytic effect when combined with CSTX-1 (AC P81694) or CSTX-9 (AC P58604). When alone, has a weak insecticidal activity, with an unknown molecular target. The polypeptide is Toxin CSTX-12 (Cupiennius salei (American wandering spider)).